A 273-amino-acid chain; its full sequence is Dermonecrotic toxin LarSicTox-alphaIB1aii (273 aa).

His5 is a catalytic residue. Positions 25 and 27 each coordinate Mg(2+). Residue His41 is the Nucleophile of the active site. 2 disulfides stabilise this stretch: Cys45/Cys51 and Cys47/Cys190. Asp85 lines the Mg(2+) pocket. The N-linked (GlcNAc...) asparagine glycan is linked to Asn250.

It belongs to the arthropod phospholipase D family. Class II subfamily. Mg(2+) serves as cofactor. Expressed by the venom gland.

Its subcellular location is the secreted. It catalyses the reaction an N-(acyl)-sphingosylphosphocholine = an N-(acyl)-sphingosyl-1,3-cyclic phosphate + choline. It carries out the reaction an N-(acyl)-sphingosylphosphoethanolamine = an N-(acyl)-sphingosyl-1,3-cyclic phosphate + ethanolamine. The catalysed reaction is a 1-acyl-sn-glycero-3-phosphocholine = a 1-acyl-sn-glycero-2,3-cyclic phosphate + choline. The enzyme catalyses a 1-acyl-sn-glycero-3-phosphoethanolamine = a 1-acyl-sn-glycero-2,3-cyclic phosphate + ethanolamine. Dermonecrotic toxins cleave the phosphodiester linkage between the phosphate and headgroup of certain phospholipids (sphingolipid and lysolipid substrates), forming an alcohol (often choline) and a cyclic phosphate. This toxin acts on sphingomyelin (SM). It may also act on ceramide phosphoethanolamine (CPE), lysophosphatidylcholine (LPC) and lysophosphatidylethanolamine (LPE), but not on lysophosphatidylserine (LPS), and lysophosphatidylglycerol (LPG). It acts by transphosphatidylation, releasing exclusively cyclic phosphate products as second products. Induces dermonecrosis, hemolysis, increased vascular permeability, edema, inflammatory response, and platelet aggregation. The polypeptide is Dermonecrotic toxin LarSicTox-alphaIB1aii (Loxosceles arizonica (Arizona brown spider)).